The primary structure comprises 503 residues: Probable cytosol aminopeptidase (503 aa).

Mn(2+) contacts are provided by K271 and D276. The active site involves K283. Mn(2+) contacts are provided by D294, D353, and E355. The active site involves R357.

Belongs to the peptidase M17 family. It depends on Mn(2+) as a cofactor.

The protein localises to the cytoplasm. The catalysed reaction is Release of an N-terminal amino acid, Xaa-|-Yaa-, in which Xaa is preferably Leu, but may be other amino acids including Pro although not Arg or Lys, and Yaa may be Pro. Amino acid amides and methyl esters are also readily hydrolyzed, but rates on arylamides are exceedingly low.. It catalyses the reaction Release of an N-terminal amino acid, preferentially leucine, but not glutamic or aspartic acids.. Presumably involved in the processing and regular turnover of intracellular proteins. Catalyzes the removal of unsubstituted N-terminal amino acids from various peptides. This Chlorobium phaeobacteroides (strain DSM 266 / SMG 266 / 2430) protein is Probable cytosol aminopeptidase.